The primary structure comprises 62 residues: Sperm protamine P1 (62 aa).

The interval 1-62 (MARYRHSRSR…RYSRRRRRRY (62 aa)) is disordered.

Belongs to the protamine P1 family. As to expression, testis.

It is found in the nucleus. The protein localises to the chromosome. Its function is as follows. Protamines substitute for histones in the chromatin of sperm during the haploid phase of spermatogenesis. They compact sperm DNA into a highly condensed, stable and inactive complex. This Dorcopsulus vanheurni (Lesser forest wallaby) protein is Sperm protamine P1 (PRM1).